We begin with the raw amino-acid sequence, 161 residues long: Gamma-glutamylaminecyclotransferase A (161 aa).

Substrate is bound at residue 26–29; that stretch reads YGTL. Catalysis depends on Glu-101, which acts as the Proton acceptor.

The protein belongs to the gamma-glutamylcyclotransferase family.

It catalyses the reaction epsilon-(gamma-L-glutamyl)-L-lysine = 5-oxo-L-proline + L-lysine. Its function is as follows. May contribute to degradation of proteins cross-linked by transglutaminases by degrading the cross-link between a lysine and a glutamic acid residue. Catalyzes the formation of 5-oxo-L-proline from L-gamma-glutamyl-L-epsilon-lysine. The sequence is that of Gamma-glutamylaminecyclotransferase A (ggact.1) from Danio rerio (Zebrafish).